A 130-amino-acid polypeptide reads, in one-letter code: MPTKSFHRTDRVSAQVRRDLGTIVHAAVRDNGLPSVSVSDVEISRDLAHAKVFVTALQQERSAEAVKGLKEIAGQLRTQLARAMKLRHVPELHFHYDDSVDRGERIDNLLRDLDDVGPEATSSDEDAEQR.

The segment at 111 to 130 (RDLDDVGPEATSSDEDAEQR) is disordered.

The protein belongs to the RbfA family. As to quaternary structure, monomer. Binds 30S ribosomal subunits, but not 50S ribosomal subunits or 70S ribosomes.

It is found in the cytoplasm. In terms of biological role, one of several proteins that assist in the late maturation steps of the functional core of the 30S ribosomal subunit. Associates with free 30S ribosomal subunits (but not with 30S subunits that are part of 70S ribosomes or polysomes). Required for efficient processing of 16S rRNA. May interact with the 5'-terminal helix region of 16S rRNA. The chain is Ribosome-binding factor A from Xanthomonas axonopodis pv. citri (strain 306).